Here is a 385-residue protein sequence, read N- to C-terminus: Di-N-acetylchitobiase (385 aa).

Positions 1–38 are cleaved as a signal peptide; it reads MSRPQLRRWRLVSSPPSGVPGLALLALLALLALRLAAG. Residues 39–385 enclose the GH18 domain; the sequence is TDCPCPEPEL…EVLKPKLLQR (347 aa). Catalysis depends on Glu143, which acts as the Proton donor. N-linked (GlcNAc...) asparagine glycans are attached at residues Asn193, Asn228, Asn262, and Asn299.

It belongs to the glycosyl hydrolase 18 family.

The protein localises to the lysosome. In terms of biological role, involved in the degradation of asparagine-linked glycoproteins. Hydrolyze of N-acetyl-beta-D-glucosamine (1-4)N-acetylglucosamine chitobiose core from the reducing end of the bond, it requires prior cleavage by glycosylasparaginase. The sequence is that of Di-N-acetylchitobiase (CTBS) from Homo sapiens (Human).